Consider the following 1063-residue polypeptide: Alkane uptake protein B (1063 aa).

Residues 1–17 (MKYNKTLALIPAILLAA) form the signal peptide. Residue C18 is the site of N-palmitoyl cysteine attachment. Residue C18 is the site of S-diacylglycerol cysteine attachment.

In terms of assembly, interacts with the outer membrane protein AupA.

Its subcellular location is the cell inner membrane. Functionally, required for growth on alkanes. Probably involved in the uptake of micelle-solubilized alkanes. May facilitate the transfer of alkanes from the outer membrane to the inner membrane. The polypeptide is Alkane uptake protein B (Marinobacter nauticus (strain ATCC 49840 / DSM 8798 / CIP 103578 / SP17) (Marinobacter hydrocarbonoclasticus)).